The primary structure comprises 245 residues: Transmembrane and ubiquitin-like domain-containing protein 1 (245 aa).

The required to release iHOPS from membranes stretch occupies residues 2 to 30 (ALIEGVGDEVTVLFSVLACLLVLALAWVS). A helical transmembrane segment spans residues 11 to 31 (VTVLFSVLACLLVLALAWVST). The segment covering 34–51 (TESTDPLPQSSGTTTPAQ) has biased composition (polar residues). The tract at residues 34-100 (TESTDPLPQS…ASTPPDSPQE (67 aa)) is disordered. Ser73, Ser97, and Ser126 each carry phosphoserine. The 74-residue stretch at 102–175 (LLLRLKFLND…LHCHVSTRVG (74 aa)) folds into the Ubiquitin-like domain. The next 2 helical transmembrane spans lie at 194 to 214 (IGSLLLPLLLLLLLLLWYCQI) and 219 to 239 (FFPLTATLGLAGFTLLLSLLA).

In terms of assembly, interacts with EEF1A1, GRIA2, GRIP1. Interacts with CAMLG, TUBG1. Interacts with NPM1 and CDKN2A; TMUB1 can enhance interaction between NPM1 and CDKN2A and is proposed to bridge the proteins; proposed to be mediated by iHOPS. Interacts with ERLIN2 and AMFR; TMUB1 promotes the interaction of ERLIN2 with AMFR. Post-translationally, processed by regulated intramembrane proteolysis (RIP) in the N-terminus to release iHOPS from membranes.

The protein resides in the membrane. The protein localises to the postsynaptic cell membrane. Its subcellular location is the recycling endosome. It localises to the cytoplasm. It is found in the cytoskeleton. The protein resides in the microtubule organizing center. The protein localises to the centrosome. Its subcellular location is the nucleus. It localises to the nucleolus. Its function is as follows. Involved in sterol-regulated ubiquitination and degradation of HMG-CoA reductase HMGCR. Involved in positive regulation of AMPA-selective glutamate receptor GRIA2 recycling to the cell surface. Acts as a negative regulator of hepatocyte growth during regeneration. In terms of biological role, may contribute to the regulation of translation during cell-cycle progression. May contribute to the regulation of cell proliferation. May be involved in centrosome assembly. Modulates stabilization and nucleolar localization of tumor suppressor CDKN2A and enhances association between CDKN2A and NPM1. The protein is Transmembrane and ubiquitin-like domain-containing protein 1 (Tmub1) of Rattus norvegicus (Rat).